We begin with the raw amino-acid sequence, 241 residues long: Probable 2-phosphosulfolactate phosphatase (241 aa).

This sequence belongs to the ComB family. It depends on Mg(2+) as a cofactor.

It carries out the reaction (2R)-O-phospho-3-sulfolactate + H2O = (2R)-3-sulfolactate + phosphate. This Caldanaerobacter subterraneus subsp. tengcongensis (strain DSM 15242 / JCM 11007 / NBRC 100824 / MB4) (Thermoanaerobacter tengcongensis) protein is Probable 2-phosphosulfolactate phosphatase.